The chain runs to 147 residues: Flagellar assembly factor FliW (147 aa).

The protein belongs to the FliW family. As to quaternary structure, interacts with translational regulator CsrA and flagellin(s).

The protein localises to the cytoplasm. In terms of biological role, acts as an anti-CsrA protein, binds CsrA and prevents it from repressing translation of its target genes, one of which is flagellin. Binds to flagellin and participates in the assembly of the flagellum. This is Flagellar assembly factor FliW from Chromobacterium violaceum (strain ATCC 12472 / DSM 30191 / JCM 1249 / CCUG 213 / NBRC 12614 / NCIMB 9131 / NCTC 9757 / MK).